Reading from the N-terminus, the 163-residue chain is Periplasmic nitrate reductase, electron transfer subunit (163 aa).

The signal sequence occupies residues 1-32 (MRSQDPSRRLSRRLWTLFALALCLVTGTVALA). The heme c site is built by H76, C90, C93, H94, H111, C130, C133, and H134.

Belongs to the NapB family. As to quaternary structure, component of the periplasmic nitrate reductase NapAB complex composed of NapA and NapB. Binds 2 heme C groups per subunit.

The protein resides in the periplasm. Electron transfer subunit of the periplasmic nitrate reductase complex NapAB. Receives electrons from the membrane-anchored tetraheme c-type NapC protein and transfers these to NapA subunit, thus allowing electron flow between membrane and periplasm. Essential for periplasmic nitrate reduction with nitrate as the terminal electron acceptor. The polypeptide is Periplasmic nitrate reductase, electron transfer subunit (Neorhizobium galegae (Rhizobium galegae)).